A 445-amino-acid polypeptide reads, in one-letter code: O-fucosyltransferase 23 (445 aa).

Residues 12–34 (IFSKSVACKCLVLVGIALFYRAL) form a helical; Signal-anchor for type II membrane protein membrane-spanning segment. Residues Asn97 and Asn179 are each glycosylated (N-linked (GlcNAc...) asparagine). Residue 258-260 (HMR) coordinates substrate. Asn294 is a glycosylation site (N-linked (GlcNAc...) asparagine). 374-375 (TF) provides a ligand contact to substrate. A glycan (N-linked (GlcNAc...) asparagine) is linked at Asn424.

This sequence belongs to the glycosyltransferase GT106 family. In terms of tissue distribution, expressed in dry pollen grains and germinating pollen grains.

Its subcellular location is the golgi apparatus membrane. It participates in glycan metabolism. Probable protein O-fucosyltransferase required for correct pollen tube penetration through the stigma-style interface. May be involved in protein O-glycosylation events during pollen-pistil interactions. This chain is O-fucosyltransferase 23, found in Arabidopsis thaliana (Mouse-ear cress).